A 453-amino-acid chain; its full sequence is Serine/threonine-protein phosphatase 2A 55 kDa regulatory subunit B delta isoform (453 aa).

4 WD repeats span residues 32–71 (AEADIISTVEFNYSGDLLATGDKGGRVVIFQREQENKGRA), 97–138 (EIEE…KRAE), 181–219 (AHTYHINSISVNSDHETYLSADDLRINLWHLEITDRSFN), and 230–270 (ELTE…LCDR). Residue S285 is modified to Phosphoserine. WD repeat units follow at residues 289–327 (EIISSISDVKFSHSGRYMMTRDYLSVKVWDLNMEGRPVE), 344–385 (ENDC…DVTL), and 420–452 (DFNKKILHTAWHPMESIIAVAATNNLYIFQDKI). Y305 is modified (phosphotyrosine). The residue at position 308 (T308) is a Phosphothreonine.

Belongs to the phosphatase 2A regulatory subunit B family. In terms of assembly, PP2A consists of a common heterodimeric core enzyme, composed of a 36 kDa catalytic subunit (subunit C) and a 65 kDa constant regulatory subunit (PR65 or subunit A), that associates with a variety of regulatory subunits. Proteins that associate with the core dimer include three families of regulatory subunits B (the R2/B/PR55/B55, R3/B''/PR72/PR130/PR59 and R5/B'/B56 families), the 48 kDa variable regulatory subunit, viral proteins, and cell signaling molecules. Interacts with IER5.

It is found in the cytoplasm. Substrate-recognition subunit of protein phosphatase 2A (PP2A) that plays a key role in cell cycle by controlling mitosis entry and exit. Involved in chromosome clustering during late mitosis by mediating dephosphorylation of MKI67. The activity of PP2A complexes containing PPP2R2D (PR55-delta) fluctuate during the cell cycle: the activity is high in interphase and low in mitosis. This chain is Serine/threonine-protein phosphatase 2A 55 kDa regulatory subunit B delta isoform, found in Mus musculus (Mouse).